The following is a 94-amino-acid chain: RxLR effector protein PITG_15972 (94 aa).

The signal sequence occupies residues Met1 to Ala21. Residues Arg50–Arg65 carry the RxLR-dEER motif.

The protein belongs to the RxLR effector family.

The protein localises to the secreted. It localises to the host cytoplasm. The protein resides in the host nucleus. Functionally, effector that enhances P.infestans colonization of Nicotiana benthamiana leaves. This is RxLR effector protein PITG_15972 from Phytophthora infestans (strain T30-4) (Potato late blight agent).